Consider the following 407-residue polypeptide: Peptide chain release factor subunit 1 (407 aa).

This sequence belongs to the eukaryotic release factor 1 family. In terms of assembly, heterodimer of two subunits, one of which binds GTP.

It is found in the cytoplasm. Functionally, directs the termination of nascent peptide synthesis (translation) in response to the termination codons UAA, UAG and UGA. This chain is Peptide chain release factor subunit 1 (prf1), found in Archaeoglobus fulgidus (strain ATCC 49558 / DSM 4304 / JCM 9628 / NBRC 100126 / VC-16).